The chain runs to 107 residues: ATP-dependent Clp protease adapter protein ClpS (107 aa).

Basic and acidic residues predominate over residues 1-12; that stretch reads MSGDKDFDKDSD. Residues 1-21 form a disordered region; sequence MSGDKDFDKDSDVTVITRTTP.

Belongs to the ClpS family. As to quaternary structure, binds to the N-terminal domain of the chaperone ClpA.

Functionally, involved in the modulation of the specificity of the ClpAP-mediated ATP-dependent protein degradation. The sequence is that of ATP-dependent Clp protease adapter protein ClpS from Zymomonas mobilis subsp. mobilis (strain ATCC 31821 / ZM4 / CP4).